The sequence spans 292 residues: Beta-lactamase-like protein 2 homolog (292 aa).

7 residues coordinate Zn(2+): His-76, His-78, Asp-80, His-81, His-145, Asp-163, and His-198.

It belongs to the metallo-beta-lactamase superfamily. Glyoxalase II family.

In Drosophila melanogaster (Fruit fly), this protein is Beta-lactamase-like protein 2 homolog.